A 387-amino-acid polypeptide reads, in one-letter code: Type 2 DNA topoisomerase 6 subunit A (387 aa).

In terms of domain architecture, Topo IIA-type catalytic spans Glu12–Lys160. Catalysis depends on Tyr106, which acts as the O-(5'-phospho-DNA)-tyrosine intermediate. 2 residues coordinate Mg(2+): Glu207 and Asp259.

This sequence belongs to the TOP6A family. As to quaternary structure, homodimer. Heterotetramer of two Top6A and two Top6B chains. Mg(2+) serves as cofactor.

It carries out the reaction ATP-dependent breakage, passage and rejoining of double-stranded DNA.. Relaxes both positive and negative superturns and exhibits a strong decatenase activity. This Sulfurisphaera tokodaii (strain DSM 16993 / JCM 10545 / NBRC 100140 / 7) (Sulfolobus tokodaii) protein is Type 2 DNA topoisomerase 6 subunit A.